The primary structure comprises 245 residues: 1-(5-phosphoribosyl)-5-[(5-phosphoribosylamino)methylideneamino] imidazole-4-carboxamide isomerase (245 aa).

The active-site Proton acceptor is Asp7. Catalysis depends on Asp129, which acts as the Proton donor.

The protein belongs to the HisA/HisF family.

The protein localises to the cytoplasm. It catalyses the reaction 1-(5-phospho-beta-D-ribosyl)-5-[(5-phospho-beta-D-ribosylamino)methylideneamino]imidazole-4-carboxamide = 5-[(5-phospho-1-deoxy-D-ribulos-1-ylimino)methylamino]-1-(5-phospho-beta-D-ribosyl)imidazole-4-carboxamide. The protein operates within amino-acid biosynthesis; L-histidine biosynthesis; L-histidine from 5-phospho-alpha-D-ribose 1-diphosphate: step 4/9. The protein is 1-(5-phosphoribosyl)-5-[(5-phosphoribosylamino)methylideneamino] imidazole-4-carboxamide isomerase of Edwardsiella ictaluri (strain 93-146).